Here is a 228-residue protein sequence, read N- to C-terminus: Phosphoribosylformylglycinamidine synthase subunit PurQ (228 aa).

Residues 2-228 enclose the Glutamine amidotransferase type-1 domain; sequence TVVVVQFGGS…DGKGILQAFG (227 aa). Residue cysteine 88 is the Nucleophile of the active site. Residues histidine 205 and glutamate 207 contribute to the active site.

In terms of assembly, part of the FGAM synthase complex composed of 1 PurL, 1 PurQ and 2 PurS subunits.

The protein localises to the cytoplasm. It catalyses the reaction N(2)-formyl-N(1)-(5-phospho-beta-D-ribosyl)glycinamide + L-glutamine + ATP + H2O = 2-formamido-N(1)-(5-O-phospho-beta-D-ribosyl)acetamidine + L-glutamate + ADP + phosphate + H(+). The catalysed reaction is L-glutamine + H2O = L-glutamate + NH4(+). Its pathway is purine metabolism; IMP biosynthesis via de novo pathway; 5-amino-1-(5-phospho-D-ribosyl)imidazole from N(2)-formyl-N(1)-(5-phospho-D-ribosyl)glycinamide: step 1/2. Part of the phosphoribosylformylglycinamidine synthase complex involved in the purines biosynthetic pathway. Catalyzes the ATP-dependent conversion of formylglycinamide ribonucleotide (FGAR) and glutamine to yield formylglycinamidine ribonucleotide (FGAM) and glutamate. The FGAM synthase complex is composed of three subunits. PurQ produces an ammonia molecule by converting glutamine to glutamate. PurL transfers the ammonia molecule to FGAR to form FGAM in an ATP-dependent manner. PurS interacts with PurQ and PurL and is thought to assist in the transfer of the ammonia molecule from PurQ to PurL. The protein is Phosphoribosylformylglycinamidine synthase subunit PurQ of Haloquadratum walsbyi (strain DSM 16790 / HBSQ001).